The chain runs to 919 residues: Valine--tRNA ligase (919 aa).

Positions 46 to 56 match the 'HIGH' region motif; the sequence is PNVTGTLHMGH. The short motif at 528-532 is the 'KMSKS' region element; the sequence is KMSKS. Lys-531 provides a ligand contact to ATP. Positions 849–919 form a coiled coil; it reads LAGLVDIEAE…KTLEKKEALG (71 aa).

Belongs to the class-I aminoacyl-tRNA synthetase family. ValS type 1 subfamily. As to quaternary structure, monomer.

The protein resides in the cytoplasm. The catalysed reaction is tRNA(Val) + L-valine + ATP = L-valyl-tRNA(Val) + AMP + diphosphate. Its function is as follows. Catalyzes the attachment of valine to tRNA(Val). As ValRS can inadvertently accommodate and process structurally similar amino acids such as threonine, to avoid such errors, it has a 'posttransfer' editing activity that hydrolyzes mischarged Thr-tRNA(Val) in a tRNA-dependent manner. This Francisella tularensis subsp. tularensis (strain SCHU S4 / Schu 4) protein is Valine--tRNA ligase.